A 365-amino-acid polypeptide reads, in one-letter code: Cobalt-precorrin-5B C(1)-methyltransferase (365 aa).

This sequence belongs to the CbiD family.

It catalyses the reaction Co-precorrin-5B + S-adenosyl-L-methionine = Co-precorrin-6A + S-adenosyl-L-homocysteine. It participates in cofactor biosynthesis; adenosylcobalamin biosynthesis; cob(II)yrinate a,c-diamide from sirohydrochlorin (anaerobic route): step 6/10. Its function is as follows. Catalyzes the methylation of C-1 in cobalt-precorrin-5B to form cobalt-precorrin-6A. The polypeptide is Cobalt-precorrin-5B C(1)-methyltransferase (Clostridium perfringens (strain 13 / Type A)).